Reading from the N-terminus, the 630-residue chain is FAST kinase domain-containing protein 4 (630 aa).

Residues 560–618 (IAFLRWEFPNFNSRSKDLLGRFVLARRHVLAAGFLVVDVPYYEWLDLKSEWQKSAYLKD) enclose the RAP domain.

It belongs to the FAST kinase family. Expression detected in spleen, testis, colon, heart, smooth muscle, kidney, brain, lung, liver, brown and white adipose tissue with highest expression in testis, heart, smooth muscle and brown adipose tissue.

It localises to the mitochondrion matrix. Plays a role in processing of mitochondrial RNA precursors and in stabilization of a subset of mature mitochondrial RNA species, such as MT-CO1, MT-CO2, MT-CYB, MT-CO3, MT-ND3, MT-ND5 and MT-ATP8/6. May play a role in cell cycle progression. This chain is FAST kinase domain-containing protein 4 (Tbrg4), found in Mus musculus (Mouse).